The primary structure comprises 327 residues: Zinc transport protein ZntB (327 aa).

At 1-271 the chain is on the cytoplasmic side; the sequence is MESFAGKELQ…AMNRRTYTMS (271 aa). A helical membrane pass occupies residues 272–292; the sequence is LLAMVFLPTTFLTGLFGVNLG. At 293-300 the chain is on the periplasmic side; that stretch reads GIPGGDAP. The chain crosses the membrane as a helical span at residues 301–321; it reads FGFFTFCLMLVILVGGVAWWL. Over 322-327 the chain is Cytoplasmic; sequence KRSKWL.

Belongs to the CorA metal ion transporter (MIT) (TC 1.A.35) family.

Its subcellular location is the cell inner membrane. It catalyses the reaction Zn(2+)(out) + H(+)(out) = Zn(2+)(in) + H(+)(in). In terms of biological role, zinc transporter. Acts as a Zn(2+):proton symporter, which likely mediates zinc ion uptake. In Pectobacterium carotovorum subsp. carotovorum (strain PC1), this protein is Zinc transport protein ZntB.